An 887-amino-acid polypeptide reads, in one-letter code: Tiger protein O1 (887 aa).

The first 21 residues, 1 to 21, serve as a signal peptide directing secretion; the sequence is MEKKLLIIVIVFLFSTIQVFC. Over 22 to 845 the chain is Extracellular; the sequence is RIDDKTFVIS…SLSKKSIILL (824 aa). Residues Asn32, Asn70, Asn186, Asn207, Asn219, Asn259, Asn297, Asn314, Asn325, Asn338, Asn354, Asn393, Asn431, Asn588, Asn629, Asn652, Asn687, Asn710, Asn720, Asn730, Asn775, Asn788, Asn811, and Asn816 are each glycosylated (N-linked (GlcNAc...) asparagine). The IPT/TIG 1 domain occupies 277–365; it reads NSVPYSKGGL…TNENKLLFNY (89 aa). Positions 710 to 767 constitute an IPT/TIG 2 domain; it reads NTSSINVNGGNLTIYGKNFYNVSNIKVEVDNQLKCNKIEFINLNSLTCFLPPFIETLF. The disordered stretch occupies residues 811–835; the sequence is NDTSENSTNDILNHEKNNNNQKDGS. A helical membrane pass occupies residues 846–866; sequence SILLPSFIILIVSLAIVILVI. The Cytoplasmic segment spans residues 867–887; the sequence is KRNKTKHSKNMSSKEKELMKQ.

The protein resides in the membrane. This Dictyostelium discoideum (Social amoeba) protein is Tiger protein O1 (tgrO1).